Consider the following 201-residue polypeptide: Recombination protein RecR (201 aa).

The C4-type zinc finger occupies 57 to 72 (CTHCRTFTEEESCAIC). Positions 81–176 (GFLCVVEQPS…KVSRIAHGIP (96 aa)) constitute a Toprim domain.

It belongs to the RecR family.

Functionally, may play a role in DNA repair. It seems to be involved in an RecBC-independent recombinational process of DNA repair. It may act with RecF and RecO. This Histophilus somni (strain 2336) (Haemophilus somnus) protein is Recombination protein RecR.